Consider the following 78-residue polypeptide: Large ribosomal subunit protein bL28 (78 aa).

Belongs to the bacterial ribosomal protein bL28 family.

The protein is Large ribosomal subunit protein bL28 of Tropheryma whipplei (strain TW08/27) (Whipple's bacillus).